Here is a 282-residue protein sequence, read N- to C-terminus: Pantothenate synthetase (282 aa).

28-35 is an ATP binding site; it reads MGALHSGH. Residue H35 is the Proton donor of the active site. Q59 lines the (R)-pantoate pocket. Q59 is a beta-alanine binding site. 146–149 is an ATP binding site; sequence GEKD. Q152 contributes to the (R)-pantoate binding site. ATP contacts are provided by residues V175 and 183–186; that span reads LSSR.

It belongs to the pantothenate synthetase family. Homodimer.

It is found in the cytoplasm. The catalysed reaction is (R)-pantoate + beta-alanine + ATP = (R)-pantothenate + AMP + diphosphate + H(+). It participates in cofactor biosynthesis; (R)-pantothenate biosynthesis; (R)-pantothenate from (R)-pantoate and beta-alanine: step 1/1. In terms of biological role, catalyzes the condensation of pantoate with beta-alanine in an ATP-dependent reaction via a pantoyl-adenylate intermediate. The protein is Pantothenate synthetase of Salinispora arenicola (strain CNS-205).